The following is a 1793-amino-acid chain: Protein TIC 214 (1793 aa).

The next 6 helical transmembrane spans lie at 11-31, 64-84, 90-112, 129-149, 172-192, and 222-242; these read LVSLCLKIINSVIVVGLYYGF, FITGQLVMFISIYYAPLHIAL, ITVITLPYLLLYFLGNNQKNFLN, IFFQNLFFQLLNPFFLPSSIL, VGWLIGHVFFMKWIGLMLVWI, and IFLIFFFITCLYYLGRIPPIY. The disordered stretch occupies residues 1504–1524; sequence DIEEDYGESDSKKGGKDKNKK.

This sequence belongs to the TIC214 family. As to quaternary structure, part of the Tic complex.

It is found in the plastid. It localises to the chloroplast inner membrane. Involved in protein precursor import into chloroplasts. May be part of an intermediate translocation complex acting as a protein-conducting channel at the inner envelope. This Lotus japonicus (Lotus corniculatus var. japonicus) protein is Protein TIC 214.